Consider the following 947-residue polypeptide: Glutamate receptor 2.8 (947 aa).

The signal sequence occupies residues 1 to 26 (MNPKKNNNTFLSYFVCLFLLLEVGLG). Residues 27–577 (QNQISEIKVG…NTWVFLKPWG (551 aa)) lie on the Extracellular side of the membrane. N-linked (GlcNAc...) asparagine glycans are attached at residues Asn42, Asn118, Asn333, Asn341, Asn348, Asn420, Asn478, and Asn524. A helical transmembrane segment spans residues 578 to 598 (LDLWVTTACFFVLIGFVVWLF). Topologically, residues 599–607 (EHRVNTDFR) are cytoplasmic. A helical transmembrane segment spans residues 608 to 628 (GPPHHQIGTSFWFSFSTMVFA). Residues 629–632 (HREK) lie on the Cytoplasmic side of the membrane. The helical transmembrane segment at 633-653 (VVSNLARFVVVVWCFVVLVLT) threads the bilayer. Topologically, residues 654–819 (QSYTANLTSF…NRLSLRSFWG (166 aa)) are extracellular. N-linked (GlcNAc...) asparagine glycosylation is found at Asn659, Asn704, Asn723, and Asn779. A helical membrane pass occupies residues 820–840 (LFLIAGIASFLALLIFVFLFL). Residues 841 to 947 (YENRHTLCDD…ESDIECVVEQ (107 aa)) are Cytoplasmic-facing.

This sequence belongs to the glutamate-gated ion channel (TC 1.A.10.1) family. As to quaternary structure, may form heteromers. Expressed predominantly in leaves.

The protein localises to the membrane. Glutamate-gated receptor that probably acts as a non-selective cation channel. May be involved in light-signal transduction and calcium homeostasis via the regulation of calcium influx into cells. The sequence is that of Glutamate receptor 2.8 (GLR2.8) from Arabidopsis thaliana (Mouse-ear cress).